The sequence spans 190 residues: Potassium-transporting ATPase KdpC subunit (190 aa).

A helical membrane pass occupies residues 13-33 (VGFLLLTLMCGVVYPGIVTIF).

It belongs to the KdpC family. The system is composed of three essential subunits: KdpA, KdpB and KdpC.

Its subcellular location is the cell membrane. Its function is as follows. Part of the high-affinity ATP-driven potassium transport (or Kdp) system, which catalyzes the hydrolysis of ATP coupled with the electrogenic transport of potassium into the cytoplasm. This subunit acts as a catalytic chaperone that increases the ATP-binding affinity of the ATP-hydrolyzing subunit KdpB by the formation of a transient KdpB/KdpC/ATP ternary complex. The polypeptide is Potassium-transporting ATPase KdpC subunit (Listeria monocytogenes serotype 4b (strain CLIP80459)).